Consider the following 604-residue polypeptide: UvrABC system protein C (604 aa).

Residues 12-90 enclose the GIY-YIG domain; that stretch reads TAPGVYLMRD…IKQHQPRYNL (79 aa). Residues 200 to 235 enclose the UVR domain; it reads KDLVSGFRQRMKEAAEGLHYEEAARWRDLLKAIDTT.

It belongs to the UvrC family. In terms of assembly, interacts with UvrB in an incision complex.

The protein localises to the cytoplasm. The UvrABC repair system catalyzes the recognition and processing of DNA lesions. UvrC both incises the 5' and 3' sides of the lesion. The N-terminal half is responsible for the 3' incision and the C-terminal half is responsible for the 5' incision. In Trichlorobacter lovleyi (strain ATCC BAA-1151 / DSM 17278 / SZ) (Geobacter lovleyi), this protein is UvrABC system protein C.